A 393-amino-acid polypeptide reads, in one-letter code: Ig gamma-1 chain C region, membrane-bound form (393 aa).

The tract at residues 1 to 97 is CH1; sequence AKTTPPSVYP…ASSTKVDKKI (97 aa). Cysteines 27 and 82 form a disulfide. The segment at 98–110 is hinge; the sequence is VPRDCGCKPCICT. The CH2 stretch occupies residues 111–217; sequence VPEVSSVFIF…PIEKTISKTK (107 aa). 2 disulfide bridges follow: Cys138–Cys198 and Cys244–Cys302. A glycan (N-linked (GlcNAc...) asparagine) is linked at Asn174. Positions 218-324 are CH3; sequence GRPKAPQVYT…EKSLSHSPGL (107 aa). A helical membrane pass occupies residues 340-357; the sequence is GLWTTITIFISLFLLSVC. Over 358–393 the chain is Cytoplasmic; it reads YSAAVTLFKVKWIFSSVVELKQTLVPEYKNMIGQAP.

The protein localises to the cell membrane. In Mus musculus (Mouse), this protein is Ig gamma-1 chain C region, membrane-bound form (Ighg1).